The primary structure comprises 187 residues: Ribosome-recycling factor (187 aa).

This sequence belongs to the RRF family.

It is found in the cytoplasm. In terms of biological role, responsible for the release of ribosomes from messenger RNA at the termination of protein biosynthesis. May increase the efficiency of translation by recycling ribosomes from one round of translation to another. The chain is Ribosome-recycling factor from Paracoccus denitrificans (strain Pd 1222).